A 459-amino-acid polypeptide reads, in one-letter code: Putrescine aminotransferase (459 aa).

Residues 150 to 151 (GT) and Gln-274 each bind pyridoxal 5'-phosphate. At Lys-300 the chain carries N6-(pyridoxal phosphate)lysine. Thr-332 provides a ligand contact to pyridoxal 5'-phosphate.

This sequence belongs to the class-III pyridoxal-phosphate-dependent aminotransferase family. Putrescine aminotransferase subfamily. Pyridoxal 5'-phosphate serves as cofactor.

The catalysed reaction is an alkane-alpha,omega-diamine + 2-oxoglutarate = an omega-aminoaldehyde + L-glutamate. It catalyses the reaction putrescine + 2-oxoglutarate = 1-pyrroline + L-glutamate + H2O. The enzyme catalyses cadaverine + 2-oxoglutarate = 5-aminopentanal + L-glutamate. Its pathway is amine and polyamine degradation; putrescine degradation; 4-aminobutanal from putrescine (transaminase route): step 1/1. Its function is as follows. Catalyzes the aminotransferase reaction from putrescine to 2-oxoglutarate, leading to glutamate and 4-aminobutanal, which spontaneously cyclizes to form 1-pyrroline. This is the first step in one of two pathways for putrescine degradation, where putrescine is converted into 4-aminobutanoate (gamma-aminobutyrate or GABA) via 4-aminobutanal. Also functions as a cadaverine transaminase in a a L-lysine degradation pathway to succinate that proceeds via cadaverine, glutarate and L-2-hydroxyglutarate. The chain is Putrescine aminotransferase from Escherichia coli O8 (strain IAI1).